The following is a 567-amino-acid chain: MSEITLGRFFFERLHQLKVDTVFGLPGDFNLALLDKIYEVEGMRWAGNANELNAGYAADGYARVNPNGLSALVSTFGVGELSLTNAIAGSYSEHVGVINLVGVPSSSAQAKQLLLHHTLGNGDFTVFHRMFKNISQTSAFIADINSAPAEIDRCIRDAYVYQRPVYIGLPSNLVDMKVPKSLLDKKIDLSLHPNDPESQTEVIETVEKLISEASNPVILVDACAIRHNCKPEVAKLIEETQFPVFTTPMGKSSVDESNPRFGGVYVGSLSKPEVKESVESADLILSIGALLSDFNTGSFSYGYKTRNIVEFHSDYTKIRQATFPGVQMKEALQKLLTTVKKSINPNYTPVPVPETKLINTPAAPSTPLTQEYLWTKVSSWFREGDIIITETGTSAFGIVQSRFPKNSIGISQVLWGSIGYTVGATCGAAMAAQELDPKRRVILFVGDGSLQLTVQEISTMCKWECNNTYLFVLNNDGYTIERLIHGEKAQYNDIQPWNNLQLLPLFNAKDYETKRISTVGELNDLFADKAFAVPDKIRMVEVMLPTMDAPANLVAQAKLSEKTNAEQ.

Positions 28 and 117 each coordinate pyruvate. Thiamine diphosphate contacts are provided by residues Thr-393 and 416 to 418; that span reads GSI. Asp-447 is a Mg(2+) binding site. Thiamine diphosphate is bound by residues 448–449 and 475–480; these read GS and NDGYTI. Residues Asn-475 and Gly-477 each contribute to the Mg(2+) site. Pyruvate is bound at residue Glu-481.

The protein belongs to the TPP enzyme family. In terms of assembly, homotetramer. The cofactor is Mg(2+). Requires thiamine diphosphate as cofactor.

Its subcellular location is the cytoplasm. It carries out the reaction a 2-oxocarboxylate + H(+) = an aldehyde + CO2. The enzyme catalyses pyruvate + H(+) = acetaldehyde + CO2. This is Pyruvate decarboxylase (PDC11) from Candida albicans (strain SC5314 / ATCC MYA-2876) (Yeast).